Consider the following 104-residue polypeptide: UPF0145 protein Hlac_1015 (104 aa).

Belongs to the UPF0145 family.

The protein is UPF0145 protein Hlac_1015 of Halorubrum lacusprofundi (strain ATCC 49239 / DSM 5036 / JCM 8891 / ACAM 34).